The following is a 1129-amino-acid chain: Ubiquitin carboxyl-terminal hydrolase 15 (1129 aa).

Residues 1-26 (MVLSNVDAEEVNMDSSMELEESSQEP) form a disordered region. Residues 7–23 (DAEEVNMDSSMELEESS) are compositionally biased toward acidic residues. Positions 51–204 (HASYSWVVKN…NDEICISVTV (154 aa)) constitute an MATH domain. Residues 230 to 545 (VGLKNQGATC…NAYMLVYFRK (316 aa)) enclose the USP domain. C239 serves as the catalytic Nucleophile. The Proton acceptor role is filled by H481.

This sequence belongs to the peptidase C19 family.

Its subcellular location is the nucleus. The enzyme catalyses Thiol-dependent hydrolysis of ester, thioester, amide, peptide and isopeptide bonds formed by the C-terminal Gly of ubiquitin (a 76-residue protein attached to proteins as an intracellular targeting signal).. Its function is as follows. Hydrolase that deubiquitinates target proteins. Cleaves the UBL propeptide in sde2. Involved in regulating the steady-state levels of proteins including prp4. In Schizosaccharomyces pombe (strain 972 / ATCC 24843) (Fission yeast), this protein is Ubiquitin carboxyl-terminal hydrolase 15.